Reading from the N-terminus, the 283-residue chain is 4-diphosphocytidyl-2-C-methyl-D-erythritol kinase (283 aa).

Lys10 is an active-site residue. 99 to 109 is a binding site for ATP; that stretch reads PMGGGLGGGSS. Asp141 is an active-site residue.

The protein belongs to the GHMP kinase family. IspE subfamily. In terms of assembly, homodimer.

It catalyses the reaction 4-CDP-2-C-methyl-D-erythritol + ATP = 4-CDP-2-C-methyl-D-erythritol 2-phosphate + ADP + H(+). The protein operates within isoprenoid biosynthesis; isopentenyl diphosphate biosynthesis via DXP pathway; isopentenyl diphosphate from 1-deoxy-D-xylulose 5-phosphate: step 3/6. Its function is as follows. Catalyzes the phosphorylation of the position 2 hydroxy group of 4-diphosphocytidyl-2C-methyl-D-erythritol. The polypeptide is 4-diphosphocytidyl-2-C-methyl-D-erythritol kinase (Escherichia coli O81 (strain ED1a)).